The following is a 655-amino-acid chain: Chaperone protein dnaK1 (655 aa).

Thr197 is subject to Phosphothreonine; by autocatalysis.

This sequence belongs to the heat shock protein 70 family.

Its function is as follows. Acts as a chaperone. This chain is Chaperone protein dnaK1 (dnaK1), found in Synechococcus elongatus (strain ATCC 33912 / PCC 7942 / FACHB-805) (Anacystis nidulans R2).